A 172-amino-acid chain; its full sequence is NADH-ubiquinone oxidoreductase chain 6 (172 aa).

The next 6 helical transmembrane spans lie at 1–21, 25–45, 48–68, 86–106, 108–128, and 141–161; these read MLSLVLCFFVMFLLGVAVVVL, PYFSALGLVFVAVSGCFIVLY, GTFLSLVLVLLYLGGMMVVFV, VIWFFVICVLCICFAGYMSFN, FFLDVSVACEGADYTGGIFGA, and LILVLAGWALLVCLFSVLVVV.

Belongs to the complex I subunit 6 family.

The protein resides in the mitochondrion membrane. It carries out the reaction a ubiquinone + NADH + 5 H(+)(in) = a ubiquinol + NAD(+) + 4 H(+)(out). In terms of biological role, core subunit of the mitochondrial membrane respiratory chain NADH dehydrogenase (Complex I) that is believed to belong to the minimal assembly required for catalysis. Complex I functions in the transfer of electrons from NADH to the respiratory chain. The immediate electron acceptor for the enzyme is believed to be ubiquinone. The protein is NADH-ubiquinone oxidoreductase chain 6 (MT-ND6) of Petromyzon marinus (Sea lamprey).